The chain runs to 28 residues: Heat shock protein 81 (28 aa).

Residues asparagine 5 and aspartate 21 each coordinate ATP.

This sequence belongs to the heat shock protein 90 family. Homodimer.

Its subcellular location is the cytoplasm. In terms of biological role, putative molecular chaperone that may promote the maturation, structural maintenance and proper regulation of specific target proteins. The chain is Heat shock protein 81 from Pseudotsuga menziesii (Douglas-fir).